A 66-amino-acid polypeptide reads, in one-letter code: Muscarinic toxin 4 (66 aa).

Cystine bridges form between C3–C24, C17–C42, C46–C58, and C59–C64.

The protein belongs to the three-finger toxin family. Short-chain subfamily. Aminergic toxin sub-subfamily. In terms of assembly, monomer. In terms of tissue distribution, expressed by the venom gland.

The protein localises to the secreted. In terms of biological role, binds to the muscarinic acetylcholine receptor (CHRM). The chain is Muscarinic toxin 4 from Dendroaspis angusticeps (Eastern green mamba).